The primary structure comprises 265 residues: Reduced viability upon starvation protein 161 (265 aa).

Positions 15-239 (HSVIIKNVDK…LDQQSRDDYA (225 aa)) constitute a BAR domain. Positions 126-193 (YFKEIEEAIK…NQLKTELPQL (68 aa)) form a coiled coil.

It localises to the cytoplasm. The protein localises to the cytoskeleton. Its function is as follows. Component of a cytoskeletal structure that is required for the formation of endocytic vesicles at the plasma membrane level. The sequence is that of Reduced viability upon starvation protein 161 (RVS161) from Saccharomyces cerevisiae (strain ATCC 204508 / S288c) (Baker's yeast).